The following is a 221-amino-acid chain: PKHD-type hydroxylase Pro_1271 (221 aa).

Positions 80–174 constitute a Fe2OG dioxygenase domain; it reads KVHGVMFSKS…RIVCVGWIQS (95 aa). His-98, Asp-100, and His-155 together coordinate Fe cation. A 2-oxoglutarate-binding site is contributed by Arg-165.

It depends on Fe(2+) as a cofactor. The cofactor is L-ascorbate.

The chain is PKHD-type hydroxylase Pro_1271 from Prochlorococcus marinus (strain SARG / CCMP1375 / SS120).